Consider the following 1369-residue polypeptide: Xanthine dehydrogenase (1369 aa).

The 2Fe-2S ferredoxin-type domain maps to G20 to I106. Positions 58, 63, 66, 88, 128, 131, 164, and 166 each coordinate [2Fe-2S] cluster. Residues N265–P450 enclose the FAD-binding PCMH-type domain. FAD-binding positions include L293–V300, F373, S383–N387, D396, L440, and K458. Positions 804 and 835 each coordinate Mo-molybdopterin. The substrate site is built by E839 and R917. R949 contributes to the Mo-molybdopterin binding site. F951 and T1047 together coordinate substrate. A1116 serves as a coordination point for Mo-molybdopterin. E1305 (proton acceptor) is an active-site residue.

This sequence belongs to the xanthine dehydrogenase family. Homodimer. [2Fe-2S] cluster is required as a cofactor. It depends on FAD as a cofactor. The cofactor is Mo-molybdopterin.

The enzyme catalyses xanthine + NAD(+) + H2O = urate + NADH + H(+). It catalyses the reaction hypoxanthine + NAD(+) + H2O = xanthine + NADH + H(+). Key enzyme involved in purine catabolism. Catalyzes the oxidation of hypoxanthine to xanthine and the oxidation of xanthine to urate. The sequence is that of Xanthine dehydrogenase (XDH) from Oryza sativa subsp. japonica (Rice).